The sequence spans 222 residues: MNDGFAMNTHSKDERAPENGQAENMAVENGAEAAQAADRATPVSEEDVLLRLAKENEDLKERALRLTAEMENLRKRTQRDVADARVYGIANFARDMLTVSDNLQRALQAVSEEARAQADSGLKALVEGVEMTERAMLATLERHGVKRVDPNGEKFDPHFHQAMFEVPNADVPNNTVVQVVQPGYVIGDRVLRPAMVGVAKGGPKAETPAATSEQAAQGPEGA.

2 disordered regions span residues 1-21 and 200-222; these read MNDG…ENGQ and KGGP…PEGA.

This sequence belongs to the GrpE family. As to quaternary structure, homodimer.

The protein localises to the cytoplasm. Its function is as follows. Participates actively in the response to hyperosmotic and heat shock by preventing the aggregation of stress-denatured proteins, in association with DnaK and GrpE. It is the nucleotide exchange factor for DnaK and may function as a thermosensor. Unfolded proteins bind initially to DnaJ; upon interaction with the DnaJ-bound protein, DnaK hydrolyzes its bound ATP, resulting in the formation of a stable complex. GrpE releases ADP from DnaK; ATP binding to DnaK triggers the release of the substrate protein, thus completing the reaction cycle. Several rounds of ATP-dependent interactions between DnaJ, DnaK and GrpE are required for fully efficient folding. The sequence is that of Protein GrpE from Chelativorans sp. (strain BNC1).